Here is a 438-residue protein sequence, read N- to C-terminus: Putative hydroxypyruvate reductase (438 aa).

It carries out the reaction (R)-glycerate + NAD(+) = 3-hydroxypyruvate + NADH + H(+). It catalyses the reaction (R)-glycerate + NADP(+) = 3-hydroxypyruvate + NADPH + H(+). It participates in carbohydrate acid metabolism; tartrate degradation; 3-hydroxypyruvate from D-glycerate: step 1/1. Functionally, degrades an unidentified toxic product from the first step of tartrate degradation. This Agrobacterium vitis (Rhizobium vitis) protein is Putative hydroxypyruvate reductase (ttuD).